Reading from the N-terminus, the 235-residue chain is Sugar fermentation stimulation protein homolog (235 aa).

The protein belongs to the SfsA family.

In Aliivibrio fischeri (strain MJ11) (Vibrio fischeri), this protein is Sugar fermentation stimulation protein homolog.